Consider the following 51-residue polypeptide: Sperm protamine P1 (51 aa).

2 disulfides stabilise this stretch: Cys7-Cys15 and Cys40-Cys48.

It belongs to the protamine P1 family. Cross-linked by interchain disulfide bonds around the DNA-helix. As to expression, testis.

The protein localises to the nucleus. It localises to the chromosome. Functionally, protamines substitute for histones in the chromatin of sperm during the haploid phase of spermatogenesis. They compact sperm DNA into a highly condensed, stable and inactive complex. This is Sperm protamine P1 (PRM1) from Capra hircus (Goat).